The primary structure comprises 58 residues: Large ribosomal subunit protein uL30 (58 aa).

This sequence belongs to the universal ribosomal protein uL30 family. As to quaternary structure, part of the 50S ribosomal subunit.

The polypeptide is Large ribosomal subunit protein uL30 (Porphyromonas gingivalis (strain ATCC 33277 / DSM 20709 / CIP 103683 / JCM 12257 / NCTC 11834 / 2561)).